The sequence spans 186 residues: Ribosome-recycling factor (186 aa).

Belongs to the RRF family.

The protein resides in the cytoplasm. Responsible for the release of ribosomes from messenger RNA at the termination of protein biosynthesis. May increase the efficiency of translation by recycling ribosomes from one round of translation to another. In Bartonella quintana (strain Toulouse) (Rochalimaea quintana), this protein is Ribosome-recycling factor.